The following is a 155-amino-acid chain: Protein SprT-like (155 aa).

In terms of domain architecture, SprT-like spans 7-145 (QQHMEEVSLQ…GSCGGRLKQT (139 aa)). Zn(2+) is bound at residue histidine 67. Glutamate 68 is an active-site residue. Position 71 (histidine 71) interacts with Zn(2+).

Belongs to the SprT family. It depends on Zn(2+) as a cofactor.

The protein resides in the cytoplasm. This chain is Protein SprT-like, found in Listeria innocua serovar 6a (strain ATCC BAA-680 / CLIP 11262).